A 465-amino-acid chain; its full sequence is 3-isopropylmalate dehydratase large subunit (465 aa).

[4Fe-4S] cluster-binding residues include C347, C407, and C410.

The protein belongs to the aconitase/IPM isomerase family. LeuC type 1 subfamily. Heterodimer of LeuC and LeuD. The cofactor is [4Fe-4S] cluster.

It catalyses the reaction (2R,3S)-3-isopropylmalate = (2S)-2-isopropylmalate. Its pathway is amino-acid biosynthesis; L-leucine biosynthesis; L-leucine from 3-methyl-2-oxobutanoate: step 2/4. Catalyzes the isomerization between 2-isopropylmalate and 3-isopropylmalate, via the formation of 2-isopropylmaleate. This is 3-isopropylmalate dehydratase large subunit from Tolumonas auensis (strain DSM 9187 / NBRC 110442 / TA 4).